We begin with the raw amino-acid sequence, 400 residues long: Protein transport protein HofC homolog (400 aa).

The next 3 helical transmembrane spans lie at 165 to 185, 209 to 229, and 370 to 390; these read YPIIILAMAIMVVVAMLHFVL, LADFSGEWSWLLVLFGFLLAI, and LLIITGGIIGTLVVAMYLPIF.

The protein belongs to the GSP F family.

It localises to the cell inner membrane. The sequence is that of Protein transport protein HofC homolog (hofC) from Escherichia coli (strain K12).